A 161-amino-acid polypeptide reads, in one-letter code: N5-carboxyaminoimidazole ribonucleotide mutase (161 aa).

Substrate contacts are provided by serine 9, aspartate 12, and arginine 39.

The protein belongs to the AIR carboxylase family. Class I subfamily.

It catalyses the reaction 5-carboxyamino-1-(5-phospho-D-ribosyl)imidazole + H(+) = 5-amino-1-(5-phospho-D-ribosyl)imidazole-4-carboxylate. Its pathway is purine metabolism; IMP biosynthesis via de novo pathway; 5-amino-1-(5-phospho-D-ribosyl)imidazole-4-carboxylate from 5-amino-1-(5-phospho-D-ribosyl)imidazole (N5-CAIR route): step 2/2. Catalyzes the conversion of N5-carboxyaminoimidazole ribonucleotide (N5-CAIR) to 4-carboxy-5-aminoimidazole ribonucleotide (CAIR). The polypeptide is N5-carboxyaminoimidazole ribonucleotide mutase (Aliivibrio fischeri (strain ATCC 700601 / ES114) (Vibrio fischeri)).